The chain runs to 316 residues: Taste receptor type 2 member 3 (316 aa).

The Extracellular segment spans residues 1–6; the sequence is MMGLTE. A helical transmembrane segment spans residues 7–27; that stretch reads GVFLILSGTQFTLGILVNCFI. The Cytoplasmic segment spans residues 28–42; it reads ELVNGSSWFKTKRMS. Residues 43 to 63 form a helical membrane-spanning segment; that stretch reads LSDFIITTLALLRIILLCIIL. Residues 64-94 are Extracellular-facing; that stretch reads TDSFLIEFSPNTHDSGIIMQIIDVSWTFTNH. The helical transmembrane segment at 95–115 threads the bilayer; it reads LSIWLATCLGVLYCLKIASFS. At 116–128 the chain is on the cytoplasmic side; the sequence is HPTFLWLKWRVSR. A helical membrane pass occupies residues 129–149; the sequence is VMVWMLLGALLLSCGSTASLI. Over 150 to 186 the chain is Extracellular; the sequence is NEFKLYSVFRGIEATRNVTEHFRKKRSEYYLIHVLGT. N166 is a glycosylation site (N-linked (GlcNAc...) asparagine). Residues 187–207 traverse the membrane as a helical segment; that stretch reads LWYLPPLIVSLASYSLLIFSL. At 208–234 the chain is on the cytoplasmic side; the sequence is GRHTRQMLQNGTSSRDPTTEAHKRAIR. A helical transmembrane segment spans residues 235 to 255; the sequence is IILSFFFLFLLYFLAFLIASF. Over 256–266 the chain is Extracellular; sequence GNFLPKTKMAK. The helical transmembrane segment at 267-287 threads the bilayer; sequence MIGEVMTMFYPAGHSFILILG. Topologically, residues 288-316 are cytoplasmic; that stretch reads NSKLKQTFVVMLRCESGHLKPGSKGPIFS.

This sequence belongs to the G-protein coupled receptor T2R family. Expressed in subsets of taste receptor cells of the tongue and palate epithelium and exclusively in gustducin-positive cells. Expressed in the antrum and fundus (part of the stomach), duodenum and in gastric endocrine cells.

The protein localises to the membrane. Its function is as follows. Gustducin-coupled receptor implicated in the perception of bitter compounds in the oral cavity and the gastrointestinal tract. Signals through PLCB2 and the calcium-regulated cation channel TRPM5. The protein is Taste receptor type 2 member 3 (TAS2R3) of Homo sapiens (Human).